Here is a 279-residue protein sequence, read N- to C-terminus: 3-methyl-2-oxobutanoate hydroxymethyltransferase (279 aa).

Mg(2+) contacts are provided by aspartate 43 and aspartate 82. Residues 43–44 (DS), aspartate 82, and lysine 112 each bind 3-methyl-2-oxobutanoate. Residue glutamate 114 participates in Mg(2+) binding. The active-site Proton acceptor is glutamate 181.

The protein belongs to the PanB family. In terms of assembly, homodecamer; pentamer of dimers. The cofactor is Mg(2+).

The protein localises to the cytoplasm. The catalysed reaction is 3-methyl-2-oxobutanoate + (6R)-5,10-methylene-5,6,7,8-tetrahydrofolate + H2O = 2-dehydropantoate + (6S)-5,6,7,8-tetrahydrofolate. The protein operates within cofactor biosynthesis; (R)-pantothenate biosynthesis; (R)-pantoate from 3-methyl-2-oxobutanoate: step 1/2. In terms of biological role, catalyzes the reversible reaction in which hydroxymethyl group from 5,10-methylenetetrahydrofolate is transferred onto alpha-ketoisovalerate to form ketopantoate. The protein is 3-methyl-2-oxobutanoate hydroxymethyltransferase of Shouchella clausii (strain KSM-K16) (Alkalihalobacillus clausii).